We begin with the raw amino-acid sequence, 101 residues long: Large ribosomal subunit protein P1 (101 aa).

Residues 65-89 (AAPAAAPAEEPKEEKKEEKKEEDTT) are disordered. A compositionally biased stretch (basic and acidic residues) spans 73–87 (EEPKEEKKEEKKEED).

It belongs to the eukaryotic ribosomal protein P1/P2 family. As to quaternary structure, part of the 50S ribosomal subunit. Homodimer, it forms part of the ribosomal stalk which helps the ribosome interact with GTP-bound translation factors. Forms a heptameric uL10/P0(P1)2(P1)2(P1)2 complex, where uL10/P0 forms an elongated spine to which the P1 dimers bind in a sequential fashion.

In terms of biological role, forms part of the ribosomal stalk, playing a central role in the interaction of the ribosome with GTP-bound translation factors. The chain is Large ribosomal subunit protein P1 from Methanothermococcus thermolithotrophicus (Methanococcus thermolithotrophicus).